Consider the following 2453-residue polypeptide: Nuclear receptor corepressor 1 (2453 aa).

Polar residues predominate over residues 1-29; sequence MSSSGYPPNQGAFSTEQSRYPSHSVQYTF. 3 disordered regions span residues 1 to 116, 147 to 177, and 206 to 231; these read MSSS…QVSD, PAFGVKHEAPSSPLSGQPCGDDQNASPSKLS, and QQQLEEEAAKPPEPEKPVSPPPVEQK. The interval 1–373 is interaction with ZBTB33 and HEXIM1; the sequence is MSSSGYPPNQ…QRGAGLSATI (373 aa). Residues 51-64 show a composition bias toward low complexity; it reads SQASQLLQQQQQQQ. 2 stretches are compositionally biased toward basic and acidic residues: residues 77 to 88 and 99 to 116; these read PGSDRPQERRSG and VDHDSLESKRPRLEQVSD. S172 carries the post-translational modification Phosphoserine. The stretch at 174–216 forms a coiled coil; that stretch reads SKLSKEELIQSMDRVDREIAKVEQQILKLKKKQQQLEEEAAKP. Residues 212–221 show a composition bias toward basic and acidic residues; the sequence is EAAKPPEPEK. S224 is modified (phosphoserine). The interaction with SIN3A/B stretch occupies residues 254-312; it reads FEGLGPKVELPLYNQPSDTKVYHENIKTNQVMRKKLILFFKRRNHARKQREQKICQRYD. The stretch at 299–328 forms a coiled coil; that stretch reads ARKQREQKICQRYDQLMEAWEKKVDRIENN. Positions 435-486 constitute an SANT 1 domain; it reads QFMNVWTDHEKEIFKDKFIQHPKNFGLIASYLERKSVPDCVLYYYLTKKNEN. Disordered stretches follow at residues 497–631 and 677–908; these read KRRG…TEEE and LLQQ…PERQ. Positions 501–550 form a coiled coil; that stretch reads RNQQIARPSQEEKVEEKEEDKAEKTEKKEEEKKDDEEKDDKEDSKETTKE. Composition is skewed to basic and acidic residues over residues 509-531 and 541-556; these read SQEEKVEEKEEDKAEKTEKKEEE and KEDSKETTKEKDRTEA. The span at 592-604 shows a compositional bias: low complexity; the sequence is EAAAANAAAAATE. The span at 605–616 shows a compositional bias: pro residues; that stretch reads EPPPPLPPPPEP. Positions 622-673 constitute an SANT 2 domain; that stretch reads VETSRWTEEEMEVAKKGLVEHGRNWAAIAKMVGTKSEAQCKNFYFNYKRRHN. Residues 697–707 show a composition bias toward polar residues; the sequence is QCESVASTVSA. The segment covering 708–727 has biased composition (acidic residues); sequence QEDEDIEASNEEENPEDSEG. The span at 771 to 787 shows a compositional bias: low complexity; sequence TTDPAPCASPSSAVPTT. The segment covering 851–885 has biased composition (basic and acidic residues); sequence GEGDAKERDLESTSEKTEARDEDVVVAEQIERPEP. Position 1011 is a phosphoserine (S1011). Residues 1034–1058 form a disordered region; it reads VRLPTTRPTRPPPPLIPSSKTTVAS. K1117 participates in a covalent cross-link: Glycyl lysine isopeptide (Lys-Gly) (interchain with G-Cter in SUMO1); alternate. K1117 is covalently cross-linked (Glycyl lysine isopeptide (Lys-Gly) (interchain with G-Cter in SUMO2); alternate). S1122 is modified (phosphoserine). Residue K1195 forms a Glycyl lysine isopeptide (Lys-Gly) (interchain with G-Cter in SUMO2) linkage. Phosphoserine occurs at positions 1206, 1207, 1274, 1292, and 1333. An N6-acetyllysine modification is found at K1347. Phosphothreonine is present on T1378. A Glycyl lysine isopeptide (Lys-Gly) (interchain with G-Cter in SUMO2) cross-link involves residue K1400. K1423 is covalently cross-linked (Glycyl lysine isopeptide (Lys-Gly) (interchain with G-Cter in SUMO2); alternate). At K1423 the chain carries N6-acetyllysine; alternate. Residues 1450-1544 form a disordered region; sequence GEPVRARHTS…SIPAKSPVPG (95 aa). A phosphoserine mark is found at S1459 and S1481. The span at 1459-1469 shows a compositional bias: polar residues; that stretch reads SVVSSGPSVLR. The span at 1495 to 1514 shows a compositional bias: polar residues; that stretch reads VSYQNTISRGSPMMNRTSDV. Positions 1510-2453 are interaction with C1D; it reads RTSDVSSSKS…QYETLSDSDD (944 aa). A Glycyl lysine isopeptide (Lys-Gly) (interchain with G-Cter in SUMO2) cross-link involves residue K1525. S1598 carries the post-translational modification Phosphoserine. Disordered stretches follow at residues 1697-1780 and 1902-1939; these read RPYN…VRTQ and ALPSGKAQPHASVVYSEAGKDKGPPPKSRYEEELRTRG. 2 stretches are compositionally biased toward basic and acidic residues: residues 1718–1745 and 1919–1937; these read AEREREREREKERERERERERERERERI and AGKDKGPPPKSRYEEELRT. The short motif at 1949-1953 is the CORNR box 1 element; sequence IDVII. Residues 1959 to 2060 are disordered; the sequence is SDKDARERGS…SSQSEGMGQV (102 aa). The segment covering 1968–1979 has biased composition (low complexity); that stretch reads SQSSDSSSSLSS. Residues S1993 and S1997 each carry the phosphoserine modification. Positions 2050–2129 are ID1; it reads PSSQSEGMGQ…QSQTVLHPRP (80 aa). The tract at residues 2065-2068 is required for interaction with RARA in the absence of its ligand; it reads RLIT. The CORNR box 2 signature appears at 2073–2077; it reads ICQII. Positions 2088–2124 are enriched in polar residues; that stretch reads SQASTSTFQTSPSALSSTPVRTKTSSRYSPESQSQTV. The segment at 2088 to 2174 is disordered; it reads SQASTSTFQT…SPPQGPAVHE (87 aa). 5 positions are modified to phosphoserine: S2116, S2134, S2150, S2165, and S2198. The span at 2138 to 2156 shows a compositional bias: basic and acidic residues; sequence LVDKSRGSRPGKSPERSHI. Residues 2226-2287 are ID2; it reads IFRKLNSSGG…EDIIRKALMG (62 aa). The CORNR box 3 motif lies at 2277 to 2281; that stretch reads LEDII. Residues 2303 to 2396 form a disordered region; it reads PVGIMPGSAS…RPSSTGSTQF (94 aa). Residues 2310 to 2319 are compositionally biased toward low complexity; that stretch reads SASTSVVTSS. Position 2412 is a phosphothreonine (T2412). Phosphoserine is present on residues S2449 and S2451.

It belongs to the N-CoR nuclear receptor corepressors family. As to quaternary structure, forms a large corepressor complex that contains SIN3A/B and histone deacetylases HDAC1 and HDAC2. This complex associates with the thyroid receptor (TR) and the retinoid acid receptor (RAR) in the absence of ligand. Interacts directly with RARA; the interaction is facilitated with RARA trimethylation. Component of the N-Cor repressor complex, at least composed of CBFA2T3, HEXIM1, NCOR1, NCOR2, HDAC3, TBL1X, TBL1XR1, CORO2A and GPS2. Interacts with ZBTB33; the interaction serves to recruit the N-CoR complex to promoter regions containing methylated CpG dinucleotides. Interacts with TRIM28 and KDM3A. Interacts (via the RD1 domain) with BAZ1A (via its N-terminal); the interaction corepresses a number of NCOR1-regulated genes. Interacts with BCL6, C1D, DACH1, HEXIM1, HDAC7, RORA, RORC, SAP30, SIAH2, SIN3A and SIN3B. May interact with DEAF1. Interacts with RXRA. Interacts with SETD5. Interacts with VDR. Interacts with ZBTB7A. Interacts with AR. Interacts with HDAC3. In terms of processing, ubiquitinated; mediated by SIAH2 and leading to its subsequent proteasomal degradation. As to expression, ubiquitous.

Its subcellular location is the nucleus. In terms of biological role, mediates transcriptional repression by certain nuclear receptors. Part of a complex which promotes histone deacetylation and the formation of repressive chromatin structures which may impede the access of basal transcription factors. Participates in the transcriptional repressor activity produced by BCL6. Recruited by ZBTB7A to the androgen response elements/ARE on target genes, negatively regulates androgen receptor signaling and androgen-induced cell proliferation. Mediates the NR1D1-dependent repression and circadian regulation of TSHB expression. The NCOR1-HDAC3 complex regulates the circadian expression of the core clock gene ARTNL/BMAL1 and the genes involved in lipid metabolism in the liver. The polypeptide is Nuclear receptor corepressor 1 (Ncor1) (Mus musculus (Mouse)).